Consider the following 620-residue polypeptide: MKPAKQTTASLAFLAMGIVYGDIGTSPLYAFKEVFFSHHPLAINPDNVLGILSLVFWAFVLIVSIKYLLLVTRADQNGEGGILTLSAIAQQSAPKPWQRIAMLLGILATGFFFGEAVITPAMSVLSAVEGIAVAQPDLAPYVLPIAMMIIVALFAVQAMGTERIGRFFAPVMLLWFLVLALLGAHAIWHAPQVLRALNPAYAVHFVLLYGQHTLFILGLVVLSVTGVEALYADMGHFGIKPIRIAWFALVMPSLLLNYFGQGAYLLTLSAPTGSTFFSLAPKAWLWPLILLATFATVIASQAVISGIFSLARQAINYGYLPPMKIAHTSEHSQGQIYVPAANMLLFVAVIFVMLRFRSSANLAAAYGIAVTAIMMISSLLLVLVARYQWQWRWPRVVTIGIVFIGMDSLLLASTSTKLMEGGWLPLLLGCVVFIVMYIWQQQRQRLLEIAGNELSVSAMIQSLEEESFQRAAGTAVYLSRSLNHVPRSLLHNIKYNKTLHERNVLMTFQYEAVPRVHPCRRAEIEQVSASFWQVVIHIGYQEEPDMAQVMHCCGLKGLYLHPNETLFLLSSERLKVQKLGMWHDLKVWFFIQMSKHALRTSERLNIPPDRLIEMGVYREM.

A run of 12 helical transmembrane segments spans residues 11 to 31 (LAFLAMGIVYGDIGTSPLYAF), 51 to 71 (ILSLVFWAFVLIVSIKYLLLV), 100 to 120 (IAMLLGILATGFFFGEAVITP), 138 to 158 (LAPYVLPIAMMIIVALFAVQA), 167 to 187 (FFAPVMLLWFLVLALLGAHAI), 202 to 222 (AVHFVLLYGQHTLFILGLVVL), 246 to 266 (WFALVMPSLLLNYFGQGAYLL), 288 to 308 (LILLATFATVIASQAVISGIF), 334 to 354 (GQIYVPAANMLLFVAVIFVML), 364 to 384 (AAYGIAVTAIMMISSLLLVLV), 396 to 416 (VVTIGIVFIGMDSLLLASTST), and 418 to 438 (LMEGGWLPLLLGCVVFIVMYI).

It belongs to the HAK/KUP transporter (TC 2.A.72) family.

It is found in the cell inner membrane. It catalyses the reaction K(+)(in) + H(+)(in) = K(+)(out) + H(+)(out). In terms of biological role, transport of potassium into the cell. Likely operates as a K(+):H(+) symporter. This is Probable potassium transport system protein Kup from Vibrio cholerae serotype O1 (strain ATCC 39315 / El Tor Inaba N16961).